We begin with the raw amino-acid sequence, 162 residues long: Cyclic pyranopterin monophosphate synthase (162 aa).

Substrate-binding positions include 75–77 and 115–116; these read MCH and ME. The active site involves aspartate 130.

This sequence belongs to the MoaC family. In terms of assembly, homohexamer; trimer of dimers.

It carries out the reaction (8S)-3',8-cyclo-7,8-dihydroguanosine 5'-triphosphate = cyclic pyranopterin phosphate + diphosphate. It participates in cofactor biosynthesis; molybdopterin biosynthesis. In terms of biological role, catalyzes the conversion of (8S)-3',8-cyclo-7,8-dihydroguanosine 5'-triphosphate to cyclic pyranopterin monophosphate (cPMP). This Geobacillus thermodenitrificans (strain NG80-2) protein is Cyclic pyranopterin monophosphate synthase.